Here is a 158-residue protein sequence, read N- to C-terminus: SsrA-binding protein (158 aa).

A disordered region spans residues 131–158 (YDKRQTLRERQDKREADRAMSSHRRLGE).

The protein belongs to the SmpB family.

Its subcellular location is the cytoplasm. In terms of biological role, required for rescue of stalled ribosomes mediated by trans-translation. Binds to transfer-messenger RNA (tmRNA), required for stable association of tmRNA with ribosomes. tmRNA and SmpB together mimic tRNA shape, replacing the anticodon stem-loop with SmpB. tmRNA is encoded by the ssrA gene; the 2 termini fold to resemble tRNA(Ala) and it encodes a 'tag peptide', a short internal open reading frame. During trans-translation Ala-aminoacylated tmRNA acts like a tRNA, entering the A-site of stalled ribosomes, displacing the stalled mRNA. The ribosome then switches to translate the ORF on the tmRNA; the nascent peptide is terminated with the 'tag peptide' encoded by the tmRNA and targeted for degradation. The ribosome is freed to recommence translation, which seems to be the essential function of trans-translation. The chain is SsrA-binding protein from Clavibacter michiganensis subsp. michiganensis (strain NCPPB 382).